Consider the following 1391-residue polypeptide: DNA-directed RNA polymerase subunit beta (1391 aa).

It belongs to the RNA polymerase beta chain family. The RNAP catalytic core consists of 2 alpha, 1 beta, 1 beta' and 1 omega subunit. When a sigma factor is associated with the core the holoenzyme is formed, which can initiate transcription.

It catalyses the reaction RNA(n) + a ribonucleoside 5'-triphosphate = RNA(n+1) + diphosphate. Its function is as follows. DNA-dependent RNA polymerase catalyzes the transcription of DNA into RNA using the four ribonucleoside triphosphates as substrates. The chain is DNA-directed RNA polymerase subunit beta from Granulibacter bethesdensis (strain ATCC BAA-1260 / CGDNIH1).